The primary structure comprises 552 residues: Probable protein kinase UbiB (552 aa).

The chain crosses the membrane as a helical span at residues 22 to 42 (LLPANLPLAATLLLLPFKLFP). Residues 118–498 (SFNIEPLASA…QQLARQRNRR (381 aa)) form the Protein kinase domain. ATP contacts are provided by residues 124–132 (LASASVAQV) and Lys-146. Asp-281 serves as the catalytic Proton acceptor. The next 2 helical transmembrane spans lie at 501–521 (ITLLAFAGAIALAWPSLGEGI) and 530–550 (FGDIPTASYLLAAIGLSAWLL).

This sequence belongs to the ABC1 family. UbiB subfamily.

The protein resides in the cell inner membrane. It participates in cofactor biosynthesis; ubiquinone biosynthesis [regulation]. In terms of biological role, is probably a protein kinase regulator of UbiI activity which is involved in aerobic coenzyme Q (ubiquinone) biosynthesis. This is Probable protein kinase UbiB from Cellvibrio japonicus (strain Ueda107) (Pseudomonas fluorescens subsp. cellulosa).